The chain runs to 319 residues: Taste receptor type 2 member 14 (319 aa).

The Extracellular segment spans residues 1–7 (MDGVIKS). A helical transmembrane segment spans residues 8–28 (IFTFILIVEFIIGNLGNSFIV). At 29–55 (LVNCIDWVKRRKISLVDQILIALAISR) the chain is on the cytoplasmic side. Residues 56 to 76 (ISLVWSIFGSWCVSVFFPALF) form a helical membrane-spanning segment. Over 77–87 (ATEKLLRMLTN) the chain is Extracellular. 2 residues coordinate cholesterol: T86 and W89. The helical transmembrane segment at 88–108 (IWTVTNHFSVWLATILGTFYF) threads the bilayer. Over 109–129 (LKIANFSNSIFLYLKWRVKKV) the chain is Cytoplasmic. A helical membrane pass occupies residues 130 to 150 (VLVLLLVTLGLLFLNILLINI). The Extracellular portion of the chain corresponds to 151 to 184 (HINASINGYRGNMTCSSASCNFIRFSRAIALTST). N153 and N162 each carry an N-linked (GlcNAc...) asparagine glycan. A180 is a binding site for cholesterol. The helical transmembrane segment at 185 to 205 (VFVLIPFTLSLATSLLLSFSL) threads the bilayer. The Cytoplasmic segment spans residues 206 to 233 (WKHHKKMQHTVKGYRDVSTKAHRGVMQT). The helical transmembrane segment at 234 to 254 (VITFLLLYAVFLLTFFISIWA) threads the bilayer. The Extracellular portion of the chain corresponds to 255 to 263 (SVRLKENQI). The chain crosses the membrane as a helical span at residues 264-284 (IILSEMMGLAYPSGHSCVLIL). Cholesterol-binding residues include S267 and M270. Over 285-319 (GNKKLRQASLSVLWWLRYRFKHGEPSGHKEFRESS) the chain is Cytoplasmic.

This sequence belongs to the G-protein coupled receptor T2R family. Core component of the TAS2R14-GNAI1 complex, consisting of TAS2R14, GNAI1, GNB1 and GNG2; within the complex interacts with GNAI1. Core component of the TAS2R14-GNAT3 complex, consisting of TAS2R14, GNAT3, GNB1 and GNG2; within the complex interacts with GNAT3. Core component of the TAS2R14-GNAS2 complex, consisting of TAS2R14, GNAS2, GNB1 and GNG2; within the complex interacts with GNAS2.

The protein localises to the membrane. It carries out the reaction Ca(2+)(in) = Ca(2+)(out). The catalysed reaction is 3',5'-cyclic AMP(in) = 3',5'-cyclic AMP(out). Its activity is regulated as follows. Basal activity is enhanced by binding to bitter tastants, such as flufenamic acid and aristolochic acid. Regulated by cholesterol in a concentration-dependent manner. Functionally, gustducin-linked G-protein coupled receptor that plays a role in the perception of bitterness. The activity of this receptor stimulates GNAT3, activating the gustducin G-protein pathway. Likely plays a role in sensing the chemical composition of the gastrointestinal content and other extra-oral tissues via the inhibitory G-protein pathways. The chain is Taste receptor type 2 member 14 (TAS2R14) from Macaca mulatta (Rhesus macaque).